A 327-amino-acid chain; its full sequence is Metaxin-1 homolog (327 aa).

A helical transmembrane segment spans residues 281–301; that stretch reads IVAGVGAVLAMGAFAAWRGIY.

This sequence belongs to the metaxin family. Associates with the mitochondrial contact site and cristae organizing system (MICOS) complex (also known as MINOS or MitOS complex).

The protein resides in the mitochondrion outer membrane. Involved in transport of proteins into the mitochondrion. Essential for embryonic development. This chain is Metaxin-1 homolog, found in Drosophila melanogaster (Fruit fly).